The chain runs to 377 residues: Nitric oxide reductase FlRd-NAD(+) reductase (377 aa).

Belongs to the FAD-dependent oxidoreductase family. It depends on FAD as a cofactor.

It is found in the cytoplasm. It carries out the reaction 2 reduced [nitric oxide reductase rubredoxin domain] + NAD(+) + H(+) = 2 oxidized [nitric oxide reductase rubredoxin domain] + NADH. It participates in nitrogen metabolism; nitric oxide reduction. In terms of biological role, one of at least two accessory proteins for anaerobic nitric oxide (NO) reductase. Reduces the rubredoxin moiety of NO reductase. This is Nitric oxide reductase FlRd-NAD(+) reductase from Escherichia coli (strain SE11).